Reading from the N-terminus, the 349-residue chain is MSASASLPVTRAAAAPRITVLFSTEKPNANTNPYLTQLYDALPDAVQPRFFSMREALLSRYDVLHLHWPEYLLRHPSKMGTLAKQACAALLLMKLQLTGTPVVRTLHNLAPHEDRGWRERALLRWIDQLTRRWIRINATTPVRPPFTDTILHGHYRDWFATMEQGTTVPGRLLHFGLIRPYKGVEVLLDVMRDVQDPRLSLRIVGNPATPQMRTLVETACAQDARISALLAYVEEPVLAREVSACELVVLPYKQMHNSGTLLLALSLARPVLAPWSESNAAIAEEVGPGWVFLYEGEFDAALLSGMLDQVRAAPRGPAPDLSQRDWPRIGQLHYRTYLEALGKDGDAAL.

Residues 1-14 (MSASASLPVTRAAA) form the signal peptide.

This sequence belongs to the glycosyltransferase 94 family.

Its subcellular location is the cell inner membrane. The catalysed reaction is beta-D-GlcA-(1-&gt;2)-alpha-D-Man-(1-&gt;3)-beta-D-Glc-(1-&gt;4)-alpha-D-Glc-di-trans,octa-cis-undecaprenyl diphosphate + GDP-alpha-D-mannose = beta-D-Man-(1-&gt;4)-beta-D-GlcA-(1-&gt;2)-alpha-D-Man-(1-&gt;3)-beta-D-Glc-(1-&gt;4)-alpha-D-Glc-di-trans,octa-cis-undecaprenyl diphosphate + GDP + H(+). It functions in the pathway glycan biosynthesis; xanthan biosynthesis. In terms of biological role, nonprocessive beta-mannosyltransferase that catalyzes the transfer of a mannose residue from GDP-mannose to glucuronic acid-beta-1,2-mannose-alpha-1,3-glucose-beta-1,4-glucose-PP-polyisoprenyl to form the lipid-linked pentasaccharide repeating unit of xanthan, Man-GlcA-Man-Glc(2)-PP-Pol. Is involved in the biosynthesis of the exopolysaccharide xanthan. This Xanthomonas campestris pv. campestris (strain ATCC 33913 / DSM 3586 / NCPPB 528 / LMG 568 / P 25) protein is GDP-mannose:glycolipid 4-beta-D-mannosyltransferase (gumI).